We begin with the raw amino-acid sequence, 573 residues long: Putative inorganic phosphate transporter C1683.01 (573 aa).

The next 6 helical transmembrane spans lie at 48–68 (MMLAGVGFFLDSYDLFIINLV), 100–120 (AASNIGNIFGQLMFGFMGDFF), 124–144 (FVYGKEMIIVIIATILLIAMP), 154–174 (MMWVFCWRWLLGVGIGGDYPM), 194–214 (LIFAFQGFGTLAGAIVTIILL), and 230–250 (LEGVWRLQFGLALVPAIGVLI). Over residues 261–270 (FKNSQQLNSG) the composition is skewed to polar residues. Disordered regions lie at residues 261–280 (FKNSQQLNSGDNRDPKTSLN) and 290–312 (PSVTKGHPEIHESSENYLSRSNT). Transmembrane regions (helical) follow at residues 348–368 (HLLGTSVCWFLLDIAFYGVNL), 397–417 (LIIAVAGYVPGYWFNVFLVEI), 422–442 (WIQLQGFVITGLMFAILAGRW), 451–471 (FACFVIAQLFSNFGPNSTTFI), 487–507 (GISAALGKCGAILASLLFNFL), and 510–530 (IIGYGNVMWIFCGCMWGGILF).

The protein belongs to the major facilitator superfamily. Sugar transporter (TC 2.A.1.1) family.

The protein localises to the endoplasmic reticulum membrane. Functionally, high-affinity transporter for external inorganic phosphate. The sequence is that of Putative inorganic phosphate transporter C1683.01 from Schizosaccharomyces pombe (strain 972 / ATCC 24843) (Fission yeast).